A 164-amino-acid polypeptide reads, in one-letter code: Peptidyl-prolyl cis-trans isomerase A-like 4A (164 aa).

Positions 7–163 constitute a PPIase cyclophilin-type domain; the sequence is FFDITVDGKP…KKITIADCGQ (157 aa).

The protein belongs to the cyclophilin-type PPIase family. PPIase A subfamily. As to expression, highly expressed in brain, ovary and mammary gland. Moderately expressed in lung, salivary gland, kidney, skin, adipose tissue, intestine and spleen. Weakly expressed in skeletal muscle, liver and stomach. Expressed in pleiomorphic and undifferentiated liposarcomas, osteosarcomas and breast carcinomas.

It localises to the cytoplasm. It catalyses the reaction [protein]-peptidylproline (omega=180) = [protein]-peptidylproline (omega=0). Its function is as follows. PPIases accelerate the folding of proteins. It catalyzes the cis-trans isomerization of proline imidic peptide bonds in oligopeptides. The sequence is that of Peptidyl-prolyl cis-trans isomerase A-like 4A from Homo sapiens (Human).